Consider the following 367-residue polypeptide: Splicing factor U2AF-associated protein 2 (367 aa).

The disordered stretch occupies residues 36 to 104 (YDPNSLKMNK…SKSENSEASP (69 aa)). The segment covering 61–78 (TEGKESSNGEDRHTKRLY) has biased composition (basic and acidic residues). 2 consecutive RRM domains span residues 112–193 (VYIQ…KMRV) and 268–329 (LLID…VVEA).

It belongs to the HTATSF1 family. In terms of assembly, interacts with the U2AF large and U2AF small subunits.

Functionally, has a role in pre-mRNA splicing. The polypeptide is Splicing factor U2AF-associated protein 2 (uap2) (Schizosaccharomyces pombe (strain 972 / ATCC 24843) (Fission yeast)).